The chain runs to 199 residues: Holliday junction branch migration complex subunit RuvA (199 aa).

A domain I region spans residues 1 to 63 (MIGCLIGEVF…EDAQQLYGFS (63 aa)). Residues 64–142 (DAQEKTIFRT…TLAQGTSSAA (79 aa)) form a domain II region. The tract at residues 143–150 (ALPQIQFV) is flexible linker. The domain III stretch occupies residues 150–199 (VSNSPVAEAEAALQSLGYKPLEAQKAVAAVKADYTESADIIRAALKSMMK).

This sequence belongs to the RuvA family. As to quaternary structure, homotetramer. Forms an RuvA(8)-RuvB(12)-Holliday junction (HJ) complex. HJ DNA is sandwiched between 2 RuvA tetramers; dsDNA enters through RuvA and exits via RuvB. An RuvB hexamer assembles on each DNA strand where it exits the tetramer. Each RuvB hexamer is contacted by two RuvA subunits (via domain III) on 2 adjacent RuvB subunits; this complex drives branch migration. In the full resolvosome a probable DNA-RuvA(4)-RuvB(12)-RuvC(2) complex forms which resolves the HJ.

It is found in the cytoplasm. Its function is as follows. The RuvA-RuvB-RuvC complex processes Holliday junction (HJ) DNA during genetic recombination and DNA repair, while the RuvA-RuvB complex plays an important role in the rescue of blocked DNA replication forks via replication fork reversal (RFR). RuvA specifically binds to HJ cruciform DNA, conferring on it an open structure. The RuvB hexamer acts as an ATP-dependent pump, pulling dsDNA into and through the RuvAB complex. HJ branch migration allows RuvC to scan DNA until it finds its consensus sequence, where it cleaves and resolves the cruciform DNA. The sequence is that of Holliday junction branch migration complex subunit RuvA from Acinetobacter baumannii (strain AB307-0294).